We begin with the raw amino-acid sequence, 258 residues long: Tryptophan synthase alpha chain (258 aa).

Catalysis depends on proton acceptor residues glutamate 47 and aspartate 58.

Belongs to the TrpA family. As to quaternary structure, tetramer of two alpha and two beta chains.

The catalysed reaction is (1S,2R)-1-C-(indol-3-yl)glycerol 3-phosphate + L-serine = D-glyceraldehyde 3-phosphate + L-tryptophan + H2O. The protein operates within amino-acid biosynthesis; L-tryptophan biosynthesis; L-tryptophan from chorismate: step 5/5. In terms of biological role, the alpha subunit is responsible for the aldol cleavage of indoleglycerol phosphate to indole and glyceraldehyde 3-phosphate. This Bacillus thuringiensis subsp. konkukian (strain 97-27) protein is Tryptophan synthase alpha chain.